Consider the following 199-residue polypeptide: Recombination protein RecR (199 aa).

Residues 58–73 (CKKCFNLTSEEECEIC) form a C4-type zinc finger. The Toprim domain occupies 81–175 (KIICVVAETK…KVTRIAYGLP (95 aa)).

This sequence belongs to the RecR family.

In terms of biological role, may play a role in DNA repair. It seems to be involved in an RecBC-independent recombinational process of DNA repair. It may act with RecF and RecO. This Prochlorococcus marinus subsp. pastoris (strain CCMP1986 / NIES-2087 / MED4) protein is Recombination protein RecR.